Reading from the N-terminus, the 430-residue chain is Dye-decolorizing peroxidase Tfu_3078 (430 aa).

Positions 1 to 39 (MTEPDTERKGSSRRGFLAGLGAAALTGAGIGMAAGEVLR) form a signal peptide, tat-type signal. The interval 42 to 75 (LPDSDPAASPEAEQRLRMAAQRADATAAPQPGIS) is disordered. Low complexity predominate over residues 60–69 (AAQRADATAA). The Proton acceptor role is filled by Asp242. His338 is a heme binding site.

Belongs to the DyP-type peroxidase family. As to quaternary structure, monomer. Heme b is required as a cofactor. Exported by the Tat system. The position of the signal peptide cleavage has not been experimentally proven.

It is found in the secreted. It carries out the reaction Reactive Blue 5 + 2 H2O2 = 2,2'-disulfonyl azobenzene + 3-[(4-amino-6-chloro-1,3,5-triazin-2-yl)amino]benzenesulfonate + phthalate + 2 H2O + 2 H(+). Its function is as follows. Peroxidase that is able to convert a large number of compounds, but its physiological substrate is not known. Shows high reactivity towards anthraquinone dyes (e.g. Reactive Blue 19) and a modest activity towards standard peroxidase substrates (such as guaiacol and 2,6-dimethoxyphenol) and azo dyes (e.g. Reactive Blue 5). Is also able to oxidize aromatic sulfides enantioselectively, resulting in the corresponding (R)-sulfoxides, but with a poor efficiency. Does not display catalase activity. This Thermobifida fusca (strain YX) protein is Dye-decolorizing peroxidase Tfu_3078.